The primary structure comprises 406 residues: Ribulose bisphosphate carboxylase large chain (406 aa).

Residues N101 and T151 each coordinate substrate. Residue K153 is the Proton acceptor of the active site. K155 is a substrate binding site. Residues K179, D181, and E182 each contribute to the Mg(2+) site. N6-carboxylysine is present on K179. The active-site Proton acceptor is the H272. The substrate site is built by R273, H305, and S357.

Belongs to the RuBisCO large chain family. Type I subfamily. As to quaternary structure, heterohexadecamer of 8 large chains and 8 small chains; disulfide-linked. The disulfide link is formed within the large subunit homodimers. Mg(2+) is required as a cofactor. Post-translationally, the disulfide bond which can form in the large chain dimeric partners within the hexadecamer appears to be associated with oxidative stress and protein turnover.

The protein localises to the plastid. Its subcellular location is the chloroplast. It carries out the reaction 2 (2R)-3-phosphoglycerate + 2 H(+) = D-ribulose 1,5-bisphosphate + CO2 + H2O. The enzyme catalyses D-ribulose 1,5-bisphosphate + O2 = 2-phosphoglycolate + (2R)-3-phosphoglycerate + 2 H(+). RuBisCO catalyzes two reactions: the carboxylation of D-ribulose 1,5-bisphosphate, the primary event in carbon dioxide fixation, as well as the oxidative fragmentation of the pentose substrate in the photorespiration process. Both reactions occur simultaneously and in competition at the same active site. The protein is Ribulose bisphosphate carboxylase large chain (rbcL) of Trichomanes striatum (Fern).